Consider the following 371-residue polypeptide: Caytaxin (371 aa).

Residues 1-54 (MGTTEATLRMENVDVKEEWQDEDLPRPLPEETGVELLGSPVEDTSSPPNTLNFN) are disordered. The segment covering 11–29 (ENVDVKEEWQDEDLPRPLP) has biased composition (basic and acidic residues). Over residues 42–53 (EDTSSPPNTLNF) the composition is skewed to polar residues. A required for interaction with KLC1 region spans residues 115–120 (ELEWGD). The 158-residue stretch at 171–328 (IRPYMKVVTH…CVLQYEEERL (158 aa)) folds into the CRAL-TRIO domain. Residues 190 to 371 (AIIVFAACFL…VTEDQETSMS (182 aa)) form a mediates interaction with GLS region. Positions 331–371 (RRESARPQPEFVMPRSEEKPEVAPVENRSAPVTEDQETSMS) are disordered.

Interacts with KLC1; may link mitochondria to KLC1 and regulate mitochondria localization into neuron projections. Interacts with GLS; the interaction is direct and may control GLS localization, negatively regulating its activity. Interacts with PIN1 (via WW domain); upon NGF stimulation. The interaction with PIN1 and GLS is competitive. In terms of processing, cleaved by CASP3 and CASP7. The potential C-terminal product released by CASP3 cleavage may inhibit the ERK signaling pathway through MAP2K2. May be ubiquitinated by STUB1.

It is found in the cell projection. It localises to the axon. Its subcellular location is the dendrite. The protein resides in the presynapse. The protein localises to the mitochondrion. It is found in the growth cone. It localises to the cytoplasm. Functions in the development of neural tissues, particularly the postnatal maturation of the cerebellar cortex. May play a role in neurotransmission through regulation of glutaminase/GLS, an enzyme responsible for the production in neurons of the glutamate neurotransmitter. Alternatively, may regulate the localization of mitochondria within axons and dendrites. The polypeptide is Caytaxin (ATCAY) (Macaca fascicularis (Crab-eating macaque)).